The chain runs to 293 residues: 4-hydroxy-tetrahydrodipicolinate synthase (293 aa).

T45 is a pyruvate binding site. The active-site Proton donor/acceptor is Y133. The active-site Schiff-base intermediate with substrate is the K161. Residue I203 coordinates pyruvate.

It belongs to the DapA family. As to quaternary structure, homotetramer; dimer of dimers.

Its subcellular location is the cytoplasm. It catalyses the reaction L-aspartate 4-semialdehyde + pyruvate = (2S,4S)-4-hydroxy-2,3,4,5-tetrahydrodipicolinate + H2O + H(+). It participates in amino-acid biosynthesis; L-lysine biosynthesis via DAP pathway; (S)-tetrahydrodipicolinate from L-aspartate: step 3/4. Functionally, catalyzes the condensation of (S)-aspartate-beta-semialdehyde [(S)-ASA] and pyruvate to 4-hydroxy-tetrahydrodipicolinate (HTPA). In Shewanella piezotolerans (strain WP3 / JCM 13877), this protein is 4-hydroxy-tetrahydrodipicolinate synthase.